The chain runs to 302 residues: Putative S-adenosyl-L-methionine-dependent methyltransferase MMAR_1068 (302 aa).

Residues Asp127 and 156–157 contribute to the S-adenosyl-L-methionine site; that span reads DL.

This sequence belongs to the UPF0677 family.

Functionally, exhibits S-adenosyl-L-methionine-dependent methyltransferase activity. The polypeptide is Putative S-adenosyl-L-methionine-dependent methyltransferase MMAR_1068 (Mycobacterium marinum (strain ATCC BAA-535 / M)).